Here is a 102-residue protein sequence, read N- to C-terminus: Small ribosomal subunit protein uS10 (102 aa).

Belongs to the universal ribosomal protein uS10 family. Part of the 30S ribosomal subunit.

Its function is as follows. Involved in the binding of tRNA to the ribosomes. This is Small ribosomal subunit protein uS10 from Methylorubrum populi (strain ATCC BAA-705 / NCIMB 13946 / BJ001) (Methylobacterium populi).